The primary structure comprises 3677 residues: Dystrophin (3677 aa).

An actin-binding region spans residues 1–240 (MLWWEEVEDC…YITSLFQVLP (240 aa)). Calponin-homology (CH) domains follow at residues 15–119 (DVQK…LHWQ) and 134–240 (TNSE…QVLP). The segment at 63–72 (PKEKGSTRVH) is ANK2- and ANK-3 binding. Spectrin repeat units follow at residues 342–447 (LDSY…SNLH), 451–557 (MDLQ…LLQD), 560–668 (LKWQ…QISQ), 728–828 (DITE…NWLE), 831–935 (NNII…ELQT), 944–1046 (RYQE…KLEE), 1049–1154 (NKLR…EALK), 1163–1264 (LQKD…TLEE), 1268–1464 (CWHE…LFQK), 1469–1569 (EQRL…QLEK), 1573–1676 (LSRK…NLLL), 1680–1777 (KHME…TGKA), 1779–1875 (IPLK…KALE), 1878–1980 (HQWY…TLHE), 2001–2098 (YLTE…ERQG), 2106–2209 (KWRH…RVEE), 2215–2316 (SEFQ…GELE), 2317–2415 (VHIK…LRTK), 2465–2569 (ADFN…QLNE), 2576–2678 (QWLE…ALEE), 2682–2786 (LLQQ…KKSL), 2800–2922 (KRLH…RKID), and 2927–3032 (RLQE…QLHE). The interval 1416 to 1914 (SDLTSHEISL…PEPRDERKIK (499 aa)) is interaction with SYNM. In terms of domain architecture, WW spans 3047-3080 (TSVQGPWERAISPNKVPYYINHETQTTCWDHPKM). Residues 3050–3400 (QGPWERAISP…TVLEGDNMET (351 aa)) are interaction with SYNM. A ZZ-type; degenerate zinc finger spans residues 3300–3356 (KHQAKCNICKECPIIGFRYRSLKHFNYDICQSCFFSGRVAKGHKMHYPMVEYCTPTT). Cys3305, Cys3308, Cys3329, and Cys3332 together coordinate Zn(2+). Positions 3458 to 3510 (DDEHLLIQHYCQSLNQDSPLSQPRSPAQILISLESEERGELERILADLEEENR) are binds to SNTB1. Phosphoserine occurs at positions 3475, 3482, and 3492. Disordered regions lie at residues 3520–3546 (KQQH…QSPR) and 3595–3677 (EAKV…EDTM). Composition is skewed to polar residues over residues 3599 to 3618 (NGTT…SSQP) and 3654 to 3664 (QLNNSFPSSRG). Residues Ser3604, Ser3605, Ser3609, Ser3615, Ser3616, and Ser3658 each carry the phosphoserine modification.

Interacts with SYNM. Interacts with the syntrophins SNTG1 and SNTG2. Interacts with KRT19. Component of the dystrophin-associated glycoprotein complex which is composed of three subcomplexes: a cytoplasmic complex comprised of DMD (or UTRN), DTNA and a number of syntrophins, such as SNTB1, SNTB2, SNTG1 and SNTG2, the transmembrane dystroglycan complex, and the sarcoglycan-sarcospan complex. Interacts with DAG1 (betaDAG1) with DMD; the interaction is inhibited by phosphorylation on the PPXY motif of DAG1. Interacts with SYNM; SNTA1 and SNTB1. Interacts with CMYA5. Directly interacts with ANK2 and ANK3; these interactions do not interfere with betaDAG1-binding and are necessary for proper localization in muscle cells. Identified in a dystroglycan complex that contains at least PRX, DRP2, UTRN, DMD and DAG1. Interacts with DTNB. Interacts with PGM5; the interaction is direct. Interacts with NOS1; localizes NOS1 to sarcolemma in muscle cells. In terms of tissue distribution, strongly expressed in skeletal muscle and weak expression observed in newborn brain which increases in adult brain.

The protein resides in the cell membrane. The protein localises to the sarcolemma. Its subcellular location is the cytoplasm. It is found in the cytoskeleton. It localises to the postsynaptic cell membrane. Anchors the extracellular matrix to the cytoskeleton via F-actin. Ligand for dystroglycan. Component of the dystrophin-associated glycoprotein complex which accumulates at the neuromuscular junction (NMJ) and at a variety of synapses in the peripheral and central nervous systems and has a structural function in stabilizing the sarcolemma. Also implicated in signaling events and synaptic transmission. This is Dystrophin (Dmd) from Rattus norvegicus (Rat).